A 505-amino-acid polypeptide reads, in one-letter code: Trans-cinnamate 4-monooxygenase (505 aa).

Residues 3-23 traverse the membrane as a helical segment; it reads LLLLEKTLLGLFIAAITAIAI. (E)-cinnamate is bound by residues 213–218 and Ala-306; that span reads RSRLAQ. Residue Cys-447 coordinates heme.

Belongs to the cytochrome P450 family. It depends on heme as a cofactor.

The protein localises to the membrane. It catalyses the reaction (E)-cinnamate + reduced [NADPH--hemoprotein reductase] + O2 = (E)-4-coumarate + oxidized [NADPH--hemoprotein reductase] + H2O + H(+). Its pathway is phenylpropanoid metabolism; trans-4-coumarate biosynthesis; trans-4-coumarate from trans-cinnamate: step 1/1. In terms of biological role, catalyzes the first oxidative step of the phenylpropanoid pathway in higher plants by transforming trans-cinnamate into p-coumarate. The compounds formed by this pathway are essential components for lignification, pollination, and defense against ultraviolet light, predators and pathogens. This Glycyrrhiza echinata (Licorice) protein is Trans-cinnamate 4-monooxygenase (CYP73A14).